The primary structure comprises 176 residues: NAD(P)H-quinone oxidoreductase subunit 6, chloroplastic (176 aa).

A run of 5 helical transmembrane segments spans residues F10 to T30, P32 to L52, A61 to M81, L92 to M112, and F152 to A172.

Belongs to the complex I subunit 6 family. NDH is composed of at least 16 different subunits, 5 of which are encoded in the nucleus.

It is found in the plastid. Its subcellular location is the chloroplast thylakoid membrane. It carries out the reaction a plastoquinone + NADH + (n+1) H(+)(in) = a plastoquinol + NAD(+) + n H(+)(out). The catalysed reaction is a plastoquinone + NADPH + (n+1) H(+)(in) = a plastoquinol + NADP(+) + n H(+)(out). NDH shuttles electrons from NAD(P)H:plastoquinone, via FMN and iron-sulfur (Fe-S) centers, to quinones in the photosynthetic chain and possibly in a chloroplast respiratory chain. The immediate electron acceptor for the enzyme in this species is believed to be plastoquinone. Couples the redox reaction to proton translocation, and thus conserves the redox energy in a proton gradient. This Eucalyptus globulus subsp. globulus (Tasmanian blue gum) protein is NAD(P)H-quinone oxidoreductase subunit 6, chloroplastic (ndhG).